Here is a 299-residue protein sequence, read N- to C-terminus: Taste receptor type 2 member 1 (299 aa).

Over 1-9 the chain is Extracellular; that stretch reads MLESHLIIH. The helical transmembrane segment at 10–30 threads the bilayer; that stretch reads FLLAVIQFLLGTFTNGIIVVV. Over 31 to 55 the chain is Cytoplasmic; sequence NGIDLIKHRKMAPLDLLLSCLAVSR. A helical membrane pass occupies residues 56-76; sequence IFLQLFIFYVNVIVIFFIEFI. The Extracellular portion of the chain corresponds to 77-81; that stretch reads MCSEN. A helical transmembrane segment spans residues 82-102; sequence CAILLFINELELWLATWLGVF. Residues 103-124 lie on the Cytoplasmic side of the membrane; the sequence is YCAKVASVPHPLFIWLKMKISK. The helical transmembrane segment at 125 to 145 threads the bilayer; the sequence is LVPWMILGSLLYVSMTCVFHS. The Extracellular portion of the chain corresponds to 146–178; the sequence is KYAGFMVPYFLRNFFSQNATIQKEDTPAIQIFS. A glycan (N-linked (GlcNAc...) asparagine) is linked at Asn163. A helical transmembrane segment spans residues 179–199; that stretch reads FVAEFLVPLLIFLVAVLLLIF. Over 200-222 the chain is Cytoplasmic; that stretch reads SLGRHTRQMRNTVAGSRVPGRGA. The chain crosses the membrane as a helical span at residues 223–243; sequence PISALLSILSFVILYFSHCMI. Over 244-257 the chain is Extracellular; it reads KVFLSSLKFHVRSF. A helical transmembrane segment spans residues 258-278; that stretch reads ILPFFILVIGIYPSGHSLILI. The Cytoplasmic portion of the chain corresponds to 279–299; that stretch reads LGNXKLKQNAKKFLLHSKCCQ.

It belongs to the G-protein coupled receptor T2R family.

The protein localises to the membrane. In terms of biological role, receptor that may play a role in the perception of bitterness and is gustducin-linked. May play a role in sensing the chemical composition of the gastrointestinal content. The activity of this receptor may stimulate alpha gustducin, mediate PLC-beta-2 activation and lead to the gating of TRPM5. This chain is Taste receptor type 2 member 1 (TAS2R1), found in Pongo pygmaeus (Bornean orangutan).